The following is a 505-amino-acid chain: Aspartyl/glutamyl-tRNA(Asn/Gln) amidotransferase subunit B (505 aa).

The tract at residues 220–241 (NVSLRPRPAPGDPDAPFGTRSE) is disordered.

The protein belongs to the GatB/GatE family. GatB subfamily. Heterotrimer of A, B and C subunits.

It catalyses the reaction L-glutamyl-tRNA(Gln) + L-glutamine + ATP + H2O = L-glutaminyl-tRNA(Gln) + L-glutamate + ADP + phosphate + H(+). The catalysed reaction is L-aspartyl-tRNA(Asn) + L-glutamine + ATP + H2O = L-asparaginyl-tRNA(Asn) + L-glutamate + ADP + phosphate + 2 H(+). In terms of biological role, allows the formation of correctly charged Asn-tRNA(Asn) or Gln-tRNA(Gln) through the transamidation of misacylated Asp-tRNA(Asn) or Glu-tRNA(Gln) in organisms which lack either or both of asparaginyl-tRNA or glutaminyl-tRNA synthetases. The reaction takes place in the presence of glutamine and ATP through an activated phospho-Asp-tRNA(Asn) or phospho-Glu-tRNA(Gln). This Frankia casuarinae (strain DSM 45818 / CECT 9043 / HFP020203 / CcI3) protein is Aspartyl/glutamyl-tRNA(Asn/Gln) amidotransferase subunit B.